Consider the following 391-residue polypeptide: Methyltransferase/ribosomally synthesized type I borosin cyclic peptide precursor cmaMA (391 aa).

A methyltransferase domain region spans residues 1–253 (MDATANPKAG…TISTFYLPPK (253 aa)). Catalysis depends on residues Arg-72, Tyr-76, and Tyr-98. The S-adenosyl-L-methionine site is built by Tyr-98, His-100, Val-103, Ala-130, Gln-172, Ala-215, Ser-246, and Thr-247. The clasp domain stretch occupies residues 254–373 (APSAKVSLNR…AQLSGALKEG (120 aa)). The interval 374–376 (GVP) is precursor leader. Residue Leu-382 is modified to N-methylleucine. An N-methylphenylalanine mark is found at Phe-385 and Phe-386. N-methylisoleucine occurs at positions 387 and 388.

In the N-terminal section; belongs to the precorrin methyltransferase family. As to quaternary structure, homodimer. Post-translationally, cmaMA automethylates at Leu-382, Phe-385, Phe-386, Ile-387 and Ile-388 before being processed by the prolyloligopeptidase ledP which likely forms a peptidyl ester upon removal of the follower propeptide, which then undergoes macrocyclization with the N-terminus of the modified core peptide. Peptide backbone alpha-N-methylations change the physicochemical properties of amide bonds to provide structural constraints and other favorable characteristics including biological membrane permeability to peptides.

Its pathway is secondary metabolite biosynthesis. In terms of biological role, fusion protein of the methyltransferase cmaM and a type I borosin core peptide; part of the gene cluster that mediates the biosynthesis of a type I borosin, a highly methylated cyclic peptide with potent biological activities. Type I borosins derive from the C-terminus of the fusion protein, and it is the same protein that methylates its own C-terminus using S-adenosyl methionine (SAM). The C-terminus is subsequently cleaved off and macrocyclized by a prolyloligopeptidase to give the final product. This chain is Methyltransferase/ribosomally synthesized type I borosin cyclic peptide precursor cmaMA, found in Coprinopsis marcescibilis (Agaric fungus).